The primary structure comprises 334 residues: Cathepsin R (334 aa).

A signal peptide spans 1–17 (MAAVVFIAFLYLGVASG). The propeptide at 18–114 (VPVLDSSLDA…SIMKREAGSI (97 aa)) is activation peptide. 2 cysteine pairs are disulfide-bonded: Cys-136/Cys-179 and Cys-170/Cys-212. Cys-139 is an active-site residue. Asn-269 carries an N-linked (GlcNAc...) asparagine glycan. Cys-270 and Cys-323 form a disulfide bridge. Active-site residues include His-277 and Asn-301.

This sequence belongs to the peptidase C1 family. As to expression, placenta.

The protein localises to the lysosome. This chain is Cathepsin R (Ctsr), found in Mus musculus (Mouse).